We begin with the raw amino-acid sequence, 607 residues long: MRAVRRGLREGGAMAAARDPPEVSLREATQRKLRRFSELRGKLVARGEFWDIVAITAADEKQELAYNQQLSEKLKRKELPLGVQYHVFVDPAGAKIGNGGSTLCALQCLEKLYGDKWNSFTILLIHSGGYSQRLPNASALGKIFTALPLGNPIYQMLELKLAMYIDFPLNMNPGILVTCADDIELYSIGEFEFIRFDKPGFTALAHPSSLTIGTTHGVFVLDPFDDLKHRDLEYRSCHRFLHKPSIEKMYQFNAVCRPGNFCQQDFAGGDIADLKLDSDYVYTDSLFYMDHKSAKMLLAFYEKIGTLSCEIDAYGDFLQALGPGATVEYTRNTSNVIKEESELVEMRQRIFHLLKGTSLNVVVLNNSKFYHIGTTEEYLFYFTSDNSLKSELGLQSITFSIFPDIPECSGKTSCIIQSILDSRCSVAPGSVVEYSRLGPDVSVGENCIISGSYILTKAALPAHSFVCSLSLKMNRCLKYATMAFGVQDNLKKSVKTLSDIKLLQFFGVCFLSCLDVWNLKVTEELFSGNKTCLSLWTARIFPVCSSLSDSVITSLKMLNAVKNKSAFSLNSYKLLSIEEMLIYKDVEDMITYREQIFLEISLKSSLM.

The disordered stretch occupies residues Met1–Pro21.

Expressed in many tissues.

Its subcellular location is the cytoplasm. It carries out the reaction beta-L-fucose 1-phosphate + GTP + H(+) = GDP-beta-L-fucose + diphosphate. Functionally, catalyzes the formation of GDP-L-fucose from GTP and L-fucose-1-phosphate. Functions as a salvage pathway to reutilize L-fucose arising from the turnover of glycoproteins and glycolipids. This chain is Fucose-1-phosphate guanylyltransferase, found in Homo sapiens (Human).